The primary structure comprises 253 residues: Dehydration-responsive element-binding protein 1D (253 aa).

Positions 1-22 (MEKNTAASGQLMTSSAEATPSS) are enriched in polar residues. The segment at 1 to 31 (MEKNTAASGQLMTSSAEATPSSPKRPAGRTK) is disordered. The AP2/ERF DNA-binding region spans 39–98 (VFRGVRWRGCAGRWVCKVRVPGSRGDRFWIGTSDTAEETARTHDAAMLALCGASASLNFA). The segment at 131–153 (RRVPAPGRGSTATATATSGDAAS) is disordered. The span at 134-153 (PAPGRGSTATATATSGDAAS) shows a compositional bias: low complexity.

Belongs to the AP2/ERF transcription factor family. ERF subfamily.

It localises to the nucleus. Its function is as follows. Transcriptional activator that binds specifically to the DNA sequence 5'-[AG]CCGAC-3'. Binding to the C-repeat/DRE element mediates high salinity- and dehydration-inducible transcription. This is Dehydration-responsive element-binding protein 1D (DREB1D) from Oryza sativa subsp. indica (Rice).